Here is a 118-residue protein sequence, read N- to C-terminus: Small ribosomal subunit protein uS13 (118 aa).

The interval 94–118 is disordered; the sequence is SLPLRGQRTKTNARTRKGPRKPIRK.

Belongs to the universal ribosomal protein uS13 family. In terms of assembly, part of the 30S ribosomal subunit. Forms a loose heterodimer with protein S19. Forms two bridges to the 50S subunit in the 70S ribosome.

Located at the top of the head of the 30S subunit, it contacts several helices of the 16S rRNA. In the 70S ribosome it contacts the 23S rRNA (bridge B1a) and protein L5 of the 50S subunit (bridge B1b), connecting the 2 subunits; these bridges are implicated in subunit movement. Contacts the tRNAs in the A and P-sites. In Shewanella violacea (strain JCM 10179 / CIP 106290 / LMG 19151 / DSS12), this protein is Small ribosomal subunit protein uS13.